A 724-amino-acid chain; its full sequence is Degenerin mec-10 (724 aa).

The Cytoplasmic portion of the chain corresponds to 1 to 125; the sequence is MNRGPPNPRM…GQAPNSLYRA (125 aa). Residues 126-146 traverse the membrane as a helical segment; it reads VWVFLLLICAIQFINQAVAVI. At 147–684 the chain is on the extracellular side; it reads QKYQKMDKIT…FGGHLGLWSG (538 aa). N-linked (GlcNAc...) asparagine glycosylation is found at Asn294, Asn370, Asn463, Asn605, and Asn624. Residues 685 to 705 form a helical membrane-spanning segment; the sequence is VSVMTCCEFVCLVLELLYMAV. Residues 706 to 724 lie on the Cytoplasmic side of the membrane; it reads THHITQERIRRRENAANEF.

Belongs to the amiloride-sensitive sodium channel (TC 1.A.6) family. In terms of assembly, the channel is probably composed of at least the mec-2, mec-4, mec-6 and mec-10 subunits.

The protein localises to the cell membrane. Its function is as follows. Amiloride-sensitive sodium channel subunit required for mechanosensory transduction (touch sensitivity). Negatively regulates the turning step of male mating behavior. This is Degenerin mec-10 from Caenorhabditis briggsae.